The following is a 259-amino-acid chain: Keratin-associated protein 10-8 (259 aa).

A 19 X 5 AA repeats of C-C-X(3) region spans residues 26-243; sequence HVSRVSSPST…SCQPSCCHPA (218 aa). 19 consecutive repeat copies span residues 50-54, 60-64, 65-69, 98-102, 108-112, 118-122, 123-127, 133-137, 145-149, 155-159, 165-169, 170-174, 175-179, 187-191, 197-201, 202-206, 221-225, 228-232, and 239-243.

The protein belongs to the KRTAP type 10 family. As to quaternary structure, interacts with hair keratins. In terms of tissue distribution, restricted to a narrow region of the hair fiber cuticle, lying approximately 20 cell layers above the apex of the dermal papilla of the hair root; not detected in any other tissues.

Its function is as follows. In the hair cortex, hair keratin intermediate filaments are embedded in an interfilamentous matrix, consisting of hair keratin-associated proteins (KRTAP), which are essential for the formation of a rigid and resistant hair shaft through their extensive disulfide bond cross-linking with abundant cysteine residues of hair keratins. The matrix proteins include the high-sulfur and high-glycine-tyrosine keratins. This is Keratin-associated protein 10-8 (KRTAP10-8) from Homo sapiens (Human).